The chain runs to 51 residues: Toxin CSTX-18 (51 aa).

4 disulfides stabilise this stretch: cysteine 9–cysteine 22, cysteine 14–cysteine 27, cysteine 21–cysteine 36, and cysteine 29–cysteine 34.

In terms of processing, contains 4 disulfide bonds. Expressed by the venom gland.

Its subcellular location is the secreted. The polypeptide is Toxin CSTX-18 (Cupiennius salei (American wandering spider)).